Consider the following 715-residue polypeptide: MNYLKPTIFLILCLVTFVYSQPSTLTIQGTIFDQHPDYNNNFEPKGGSIKKNLVLKTLGSSKVPTLVSLDPEDDTNEDGRMITPSLFQYFYQTSSKPLTKNSGANVPIPINLVLNYDSKKQVYVYNDQYFFPIDYQGFDVDSKYRTYNNGSGYHNFHFCLKLNTKFTYQGIEDFYFIGDDDVWVFINNKLVVDLGGLHSRETGSVDVTKLGLTKGSTYDFDFFYCERHTTASTIRIETNLQVFCPWYDYCGVCSGDGSTCCNKDTTCNDGKKCTIDACPPPKTVINKAGSKITDADIAPYCSHTDVSCPDPDLCNNNNCDASTGNCKTTPITCSNQDSKCLLAQTCDPKSGCIYKSKCTGVCDTGVCDGGDCVQKSNSTCANELGNNPCMVYSCGKNGCEAKPKCPQNPSTPCDVAYCDAGECKVQHLSASECNCGCDASDLCSKNNCVNNVCVPLPIDGIDDGNACTKDTCVNGNIFHTPINKCSGCMTCNPVSGNCDLSDTVCQDGNECTTNVCESSDSVLGVCTNSTVECGATNTDKCIQFSCNEATGCQQSAVVCPDVGSCLVGYCDSKQGCLTKPRSCDTGVFCLTGECIENAGGCIVYEKRCDADNGRCQQGVCVNNTATEEGYCKSEDYDPLPFICKTGAVVSTAVIAGVTVAGAVALGVFIYGGKRGYDYWKESRNVQFSGSNSNPLYEQNPNGSGVNPLYNDNSAL.

An N-terminal signal peptide occupies residues 1-20 (MNYLKPTIFLILCLVTFVYS). The Extracellular portion of the chain corresponds to 21-651 (QPSTLTIQGT…ICKTGAVVST (631 aa)). Residues 115–256 (NYDSKKQVYV…YDYCGVCSGD (142 aa)) enclose the PA14 domain. 4 N-linked (GlcNAc...) asparagine glycosylation sites follow: N149, N377, N528, and N622. The helical transmembrane segment at 652-672 (AVIAGVTVAGAVALGVFIYGG) threads the bilayer. The Cytoplasmic segment spans residues 673–715 (KRGYDYWKESRNVQFSGSNSNPLYEQNPNGSGVNPLYNDNSAL). The segment at 690-715 (SNSNPLYEQNPNGSGVNPLYNDNSAL) is disordered.

The protein belongs to the prespore-cell-inducing factor family.

Its subcellular location is the membrane. The polypeptide is Protein psiH (psiH) (Dictyostelium discoideum (Social amoeba)).